We begin with the raw amino-acid sequence, 224 residues long: tRNA (guanine-N(7)-)-methyltransferase (224 aa).

Residues glutamate 54, glutamate 79, glutamate 106, and aspartate 129 each contribute to the S-adenosyl-L-methionine site. Aspartate 129 is a catalytic residue. Substrate is bound by residues lysine 133 and aspartate 165.

This sequence belongs to the class I-like SAM-binding methyltransferase superfamily. TrmB family.

The enzyme catalyses guanosine(46) in tRNA + S-adenosyl-L-methionine = N(7)-methylguanosine(46) in tRNA + S-adenosyl-L-homocysteine. It participates in tRNA modification; N(7)-methylguanine-tRNA biosynthesis. In terms of biological role, catalyzes the formation of N(7)-methylguanine at position 46 (m7G46) in tRNA. In Chlamydia abortus (strain DSM 27085 / S26/3) (Chlamydophila abortus), this protein is tRNA (guanine-N(7)-)-methyltransferase.